The primary structure comprises 41 residues: Large ribosomal subunit protein bL36 (41 aa).

This sequence belongs to the bacterial ribosomal protein bL36 family.

The polypeptide is Large ribosomal subunit protein bL36 (Mesorhizobium japonicum (strain LMG 29417 / CECT 9101 / MAFF 303099) (Mesorhizobium loti (strain MAFF 303099))).